The chain runs to 365 residues: 2-aminoethylphosphonate--pyruvate transaminase (365 aa).

N6-(pyridoxal phosphate)lysine is present on Lys-194.

Belongs to the class-V pyridoxal-phosphate-dependent aminotransferase family. PhnW subfamily. As to quaternary structure, homodimer. Pyridoxal 5'-phosphate is required as a cofactor.

It catalyses the reaction (2-aminoethyl)phosphonate + pyruvate = phosphonoacetaldehyde + L-alanine. Involved in phosphonate degradation. The protein is 2-aminoethylphosphonate--pyruvate transaminase of Bacillus cereus (strain ATCC 14579 / DSM 31 / CCUG 7414 / JCM 2152 / NBRC 15305 / NCIMB 9373 / NCTC 2599 / NRRL B-3711).